Consider the following 123-residue polypeptide: MSPDKTEDEDKDVNVDQDQFNEEEESLGRVILPNKKKGEMFGIVEKMEGASRLSVMCEDGYTRNARIPGRMRKRMWIREKDLVIVKPWEFQPEKADVVYRYTKTQASYLSRNHMLPEVIDIFK.

A compositionally biased stretch (acidic residues) spans 1–11; the sequence is MSPDKTEDEDK. The tract at residues 1–26 is disordered; it reads MSPDKTEDEDKDVNVDQDQFNEEEES. In terms of domain architecture, S1-like spans 28–102; sequence GRVILPNKKK…EKADVVYRYT (75 aa).

The protein belongs to the eIF-1A family.

Seems to be required for maximal rate of protein biosynthesis. Enhances ribosome dissociation into subunits and stabilizes the binding of the initiator Met-tRNA(I) to 40 S ribosomal subunits. In Thermoplasma volcanium (strain ATCC 51530 / DSM 4299 / JCM 9571 / NBRC 15438 / GSS1), this protein is Translation initiation factor 1A (eIF1A).